A 967-amino-acid polypeptide reads, in one-letter code: MSDTAEKLDYSTTLYLPQTDFPMRAGLPQKEPETVKRWQDMGLYKKLRASAAGREKFVLHDGPPYANGNIHIGHALNKILKDVITRSFQMRGFDANYVPGWDCHGLPIEWKIEEAYRARGKNKDEVPVNEFRKECRDFAAGWIKVQSEEFKRLGIEGDFENPYTTMNFHAEARIAGELLKIARSGQLYRGSKPIMWSVVERTALAEAEVEYHDVESDMIWVKFPVKDAAPALSGVSVVIWTTTPWTIPGNRAIAFSSRVEYGLFEVESAQNDFGPQTGEKLIFARKLADEAAAKAKLTFKFVRDVKSEELAAITCAHPLASLGYDFPVPLLDGDHVTDDAGTGFVHTAPSHGREDFDAWTNSVRTLEARGIDTKIPFPVDDAGFYTEDAPGFGPSAEGGAARVMDDNGKKGDANERVIKALIAANNLFARGRLKHSYPHSWRSKKPVIFRNTPQWFVYMDKELGDGTTLRSRSLDAIDQTRFVPASGQNRLRAMIEGRPDWVLSRQRSWGVPIAVFADEQGEVLVDEAVNARILEAFEAEGADAWFAEGAKERFLGNDHDHAKWQQVMDILDVWFDSGCTHTFTLEDRPDMKWPADVYLEGSDQHRGWFHSSLLESCATRGRAPYNAVVTHGFTMDEQGRKQSKSLGNVVAPQDVMKESGADILRLWVMTTDYWEDQRLGKAIIQTNIDAYRKLRNTVRWMLGTLAHDNGEEIAYADLPELEKLVLHRLSELDKVVRDGYDAFDFKKITRALIDFANVELSAFYFDIRKDTLYCDAPSSLKRRASLSVIAKLFDCLVTWLAPMLPFTTEEAWLSRYPDAESVHLAQFPEIPAEWKNDALEAKWEKIRKVRTVVTGALEVERREKRIGSSLEAAPVVHIADSDLLAALSGQDFAEICITSAITVVGDEGPADGFRLQEVAKVVVEQKLAEGVKCARSWRITTDVGSDPQYPDVSARDAAALRELAALK.

Positions 64–74 match the 'HIGH' region motif; the sequence is PYANGNIHIGH. E600 provides a ligand contact to L-isoleucyl-5'-AMP. A 'KMSKS' region motif is present at residues 641 to 645; that stretch reads KQSKS. ATP is bound at residue K644.

Belongs to the class-I aminoacyl-tRNA synthetase family. IleS type 1 subfamily. In terms of assembly, monomer.

It localises to the cytoplasm. The catalysed reaction is tRNA(Ile) + L-isoleucine + ATP = L-isoleucyl-tRNA(Ile) + AMP + diphosphate. Functionally, catalyzes the attachment of isoleucine to tRNA(Ile). As IleRS can inadvertently accommodate and process structurally similar amino acids such as valine, to avoid such errors it has two additional distinct tRNA(Ile)-dependent editing activities. One activity is designated as 'pretransfer' editing and involves the hydrolysis of activated Val-AMP. The other activity is designated 'posttransfer' editing and involves deacylation of mischarged Val-tRNA(Ile). In Agrobacterium fabrum (strain C58 / ATCC 33970) (Agrobacterium tumefaciens (strain C58)), this protein is Isoleucine--tRNA ligase.